The chain runs to 2032 residues: Cytoskeleton-associated protein 5 (2032 aa).

TOG stretches follow at residues 1 to 223 (MGDD…KLPT) and 268 to 502 (YELL…LIHG). K48 bears the N6-acetyllysine mark. 3 HEAT repeats span residues 159–197 (IILL…WIRD), 356–394 (GQYA…TTTL), and 434–472 (KSLL…VVGE). The segment at 516-579 (PLPGRTAASG…GTKNKKGLET (64 aa)) is disordered. Residues 543-554 (LKKAPAAKAGGP) show a composition bias toward low complexity. The TOG 3 stretch occupies residues 588–817 (SIEVCEEKAS…EFEKMQGQSP (230 aa)). One copy of the HEAT 4 repeat lies at 750 to 788 (GLNVKAFISNVKTALAATNPAVRTAAITLLGVMYLYVGP). The segment at 811–851 (KMQGQSPPAPTRGISKHSTSGTDEGEDGDEPDDGSNDVVDL) is disordered. Residues S816 and S845 each carry the phosphoserine modification. The segment covering 833–845 (DEGEDGDEPDDGS) has biased composition (acidic residues). 2 TOG regions span residues 853 to 1081 (PRTE…VNMP) and 1193 to 1428 (IEQL…KRPS). HEAT repeat units lie at residues 855–893 (TEIS…DAKF), 936–974 (KQHV…QTGM), and 1013–1051 (PTDL…HLGY). The disordered stretch occupies residues 1077-1160 (KVNMPAKPAP…KEDEDKSGPI (84 aa)). HEAT repeat units lie at residues 1284 to 1322 (ENEA…VYPA), 1324 to 1357 (KMFP…SYGM), and 1361 to 1399 (QPTP…VHGD). Positions 1422–1443 (RSAKRPSAAPIKQVEEKPQRAQ) are disordered. Position 1469 is a phosphoserine (S1469). Residues 1801–1822 (SMDQTGSKSDKETEKGASRIDE) form a disordered region. The segment covering 1808 to 1822 (KSDKETEKGASRIDE) has biased composition (basic and acidic residues). S1861 is subject to Phosphoserine. Residues 1932 to 1957 (PSVYLERLKILRQRCGLDNTKQDDRP) form an interaction with TACC3 region. Residues 1949-2032 (DNTKQDDRPP…RLERIKSSRK (84 aa)) form a disordered region. Polar residues predominate over residues 1971–1983 (VASSTDMLHSKLS). A compositionally biased stretch (basic and acidic residues) spans 1984–1997 (QLRESREQHQHSDL). Residues 2002 to 2014 (THSSGTVTSSSST) are compositionally biased toward low complexity. Residues 2018–2032 (DDLKKRLERIKSSRK) show a composition bias toward basic and acidic residues.

This sequence belongs to the TOG/XMAP215 family. In terms of assembly, interacts with TACC1. Interacts with SLAIN2 and SLAIN1. Interacts with HNRNPA2B1. Interacts with TACC3 independently of clathrin. Interacts with TACC3 and clathrin forming the TACC3/ch-TOG/clathrin complex located at spindle inter-microtubules bridges. Interacts with NDC80; indicative for an association with the NDC80 complex. In terms of tissue distribution, overexpressed in hepatomas and colonic tumors. Also expressed in skeletal muscle, brain, heart, placenta, lung, liver, kidney and pancreas. Expression is elevated in the brain; highly expressed in the Purkinje cell bodies of the cerebellum.

It is found in the cytoplasm. The protein resides in the cytoskeleton. The protein localises to the microtubule organizing center. It localises to the centrosome. Its subcellular location is the spindle pole. It is found in the spindle. The protein resides in the chromosome. The protein localises to the centromere. It localises to the kinetochore. Binds to the plus end of microtubules and regulates microtubule dynamics and microtubule organization. Acts as a processive microtubule polymerase. Promotes cytoplasmic microtubule nucleation and elongation. Plays a major role in organizing spindle poles. In spindle formation protects kinetochore microtubules from depolymerization by KIF2C and has an essential role in centrosomal microtubule assembly independently of KIF2C activity. Contributes to centrosome integrity. Acts as a component of the TACC3/ch-TOG/clathrin complex proposed to contribute to stabilization of kinetochore fibers of the mitotic spindle by acting as inter-microtubule bridge. The TACC3/ch-TOG/clathrin complex is required for the maintenance of kinetochore fiber tension. Enhances the strength of NDC80 complex-mediated kinetochore-tip microtubule attachments. The polypeptide is Cytoskeleton-associated protein 5 (CKAP5) (Homo sapiens (Human)).